The following is a 294-amino-acid chain: MSWIDKIFSKKPSSDSRRANVPEGVWTKCTACEQVLYRDELKRHLEVCPKCGHHMRIDARERLEYLLDKDSMTEIAADLEPKDILKFKDLKKYKDRLSAAQKDTGEKDALVAMSGTLYGMPIVAAASNFAFMGGSMGSVVGAKFVQAAEEAIEKNCPFVCFSASGGARMQEALLSLMQMAKTSAVLAKMKEKGVPFISVLTDPTLGGVSASFAMLGDLNIAEPKALIGFAGPRVIEQTVREKLPEGFQRAEFLLEHGAIDMIIQRSEMREKLASILSKLMNKPSPFLEPEIIAD.

One can recognise a CoA carboxyltransferase N-terminal domain in the interval 25–294; sequence VWTKCTACEQ…PFLEPEIIAD (270 aa). Positions 29, 32, 48, and 51 each coordinate Zn(2+). The C4-type zinc-finger motif lies at 29–51; sequence CTACEQVLYRDELKRHLEVCPKC.

This sequence belongs to the AccD/PCCB family. In terms of assembly, acetyl-CoA carboxylase is a heterohexamer composed of biotin carboxyl carrier protein (AccB), biotin carboxylase (AccC) and two subunits each of ACCase subunit alpha (AccA) and ACCase subunit beta (AccD). Requires Zn(2+) as cofactor.

It localises to the cytoplasm. It carries out the reaction N(6)-carboxybiotinyl-L-lysyl-[protein] + acetyl-CoA = N(6)-biotinyl-L-lysyl-[protein] + malonyl-CoA. The protein operates within lipid metabolism; malonyl-CoA biosynthesis; malonyl-CoA from acetyl-CoA: step 1/1. Component of the acetyl coenzyme A carboxylase (ACC) complex. Biotin carboxylase (BC) catalyzes the carboxylation of biotin on its carrier protein (BCCP) and then the CO(2) group is transferred by the transcarboxylase to acetyl-CoA to form malonyl-CoA. This Actinobacillus succinogenes (strain ATCC 55618 / DSM 22257 / CCUG 43843 / 130Z) protein is Acetyl-coenzyme A carboxylase carboxyl transferase subunit beta.